A 309-amino-acid chain; its full sequence is MILDNFFKNLIYEPVSVLGLLVFYFLLINLPISLGAVFKKKSSFAVRLITILVNLLITLQLLFRWSISGHFPISNLYESLYFLAWGITLGQLLVEREYQAPIIPSIAIPIELLIVSFACFVLPEDLKSSSNLVPALRSSWLVMHVSVVMLSYAALIIGSLLSMSVLFINKNKPLQIRSSSTGIGGFKLSNSYPVNDLVESIEFSHSEELDTLSYRSILIGFVLLTLGLISGAVWANEAWGTWWSWDPKETWAFISWLFYAAYLHMRISKGWQGRKPALLASTGFLVVLVCYLGVNFLGIGLHSYGWIFG.

8 helical membrane-spanning segments follow: residues 18 to 38 (LGLLVFYFLLINLPISLGAVF), 43 to 63 (SFAVRLITILVNLLITLQLLF), 73 to 93 (ISNLYESLYFLAWGITLGQLL), 102 to 122 (IIPSIAIPIELLIVSFACFVL), 148 to 168 (VMLSYAALIIGSLLSMSVLFI), 216 to 236 (SILIGFVLLTLGLISGAVWAN), 250 to 267 (TWAFISWLFYAAYLHMRI), and 279 to 299 (LASTGFLVVLVCYLGVNFLGI).

It belongs to the CcmF/CycK/Ccl1/NrfE/CcsA family. May interact with ccs1.

It is found in the cellular thylakoid membrane. Functionally, required during biogenesis of c-type cytochromes (cytochrome c6 and cytochrome f) at the step of heme attachment. This chain is Cytochrome c biogenesis protein CcsA, found in Prochlorococcus marinus (strain MIT 9301).